Consider the following 196-residue polypeptide: Putative AAA family ATPase L572 (196 aa).

32–39 contributes to the ATP binding site; the sequence is NAVNCKET.

The protein belongs to the AAA ATPase family.

This Acanthamoeba polyphaga mimivirus (APMV) protein is Putative AAA family ATPase L572.